The primary structure comprises 599 residues: MSAILSADDLNDFISPGVACIKPIESLPSKQPQKSDNPYEVTTEDKVQAENPTPAQISLTDCLACSGCVTSAEAVLISLQSHTEVLNTLDAHPELRLIQNEQGTSLDPRSAQDDEGRIFVASVSPQVRASLAATYGVSEKEATSIIHQLLSGPHGLRAGGKHGSGFTWVIDTNIMREAVLVLTADEVSDTLASEAKDPSLPKKPIVSSACPGWVCYAEKTHPFILPHLSKLKSPQALAGTLLKSTLSKTLGVPVSRIWHLAVMPCFDKKLEASREELTDVTWNPADGQMFSQPQTPVRDVDCVITTRELLTLASARGISLPSILSKSSSVSFPSFPDKALDDYLFSKRSLSAQSMMTGTSGGYLHHVLTSFQARNPGSEIVAERGRNADVVVYKLVSPENGSIIEAARYYGFRNIQNLVNKLKPPEMSKLSGARRNDALGGKARMQLSSRKAAAKTKFDYAYVEVMACPGGCTNGGGQIRIEDAREANLTAQTGTPADTNGAASKPSPHEQRAWLARVDEAYFSAGDSEDETEASSKHFSILEREAGIHQILHYWSDLMGVPLSKLAYTTFREVESDVGKPQEGVNATAQAALREGTNW.

[4Fe-4S] cluster-binding residues include Cys-20, Cys-62, Cys-65, Cys-68, Cys-210, Cys-265, Cys-468, and Cys-472.

It belongs to the NARF family.

Component of the cytosolic Fe/S protein assembly machinery. Required for maturation of extramitochondrial Fe/S proteins. May play a role in the transfer of pre-assembled Fe/S clusters to target apoproteins. The chain is Cytosolic Fe-S cluster assembly factor nar1 (nar1) from Aspergillus terreus (strain NIH 2624 / FGSC A1156).